We begin with the raw amino-acid sequence, 213 residues long: ATP phosphoribosyltransferase (213 aa).

It belongs to the ATP phosphoribosyltransferase family. Short subfamily. Heteromultimer composed of HisG and HisZ subunits.

It localises to the cytoplasm. The catalysed reaction is 1-(5-phospho-beta-D-ribosyl)-ATP + diphosphate = 5-phospho-alpha-D-ribose 1-diphosphate + ATP. It functions in the pathway amino-acid biosynthesis; L-histidine biosynthesis; L-histidine from 5-phospho-alpha-D-ribose 1-diphosphate: step 1/9. In terms of biological role, catalyzes the condensation of ATP and 5-phosphoribose 1-diphosphate to form N'-(5'-phosphoribosyl)-ATP (PR-ATP). Has a crucial role in the pathway because the rate of histidine biosynthesis seems to be controlled primarily by regulation of HisG enzymatic activity. The protein is ATP phosphoribosyltransferase of Chromobacterium violaceum (strain ATCC 12472 / DSM 30191 / JCM 1249 / CCUG 213 / NBRC 12614 / NCIMB 9131 / NCTC 9757 / MK).